A 557-amino-acid chain; its full sequence is Formate--tetrahydrofolate ligase (557 aa).

Threonine 65–threonine 72 lines the ATP pocket.

Belongs to the formate--tetrahydrofolate ligase family.

The catalysed reaction is (6S)-5,6,7,8-tetrahydrofolate + formate + ATP = (6R)-10-formyltetrahydrofolate + ADP + phosphate. Its pathway is one-carbon metabolism; tetrahydrofolate interconversion. This Methylorubrum extorquens (strain CM4 / NCIMB 13688) (Methylobacterium extorquens) protein is Formate--tetrahydrofolate ligase.